The following is a 711-amino-acid chain: Polyribonucleotide nucleotidyltransferase (711 aa).

Mg(2+) is bound by residues D487 and D493. A KH domain is found at 554–613; that stretch reads PRIHTMKISAEKIKDVIGKGGAVIRALTEETGTTIEIEDDGTIKIAATEGAAAKEAIRRI. The 69-residue stretch at 623 to 691 folds into the S1 motif domain; the sequence is GRIYTGKVAR…RQGRVRLSMK (69 aa). Residues 691–711 are disordered; that stretch reads KEAVEKPAEEAAAEAPAAKEE.

This sequence belongs to the polyribonucleotide nucleotidyltransferase family. In terms of assembly, component of the RNA degradosome, which is a multiprotein complex involved in RNA processing and mRNA degradation. The cofactor is Mg(2+).

It localises to the cytoplasm. The catalysed reaction is RNA(n+1) + phosphate = RNA(n) + a ribonucleoside 5'-diphosphate. In terms of biological role, involved in mRNA degradation. Catalyzes the phosphorolysis of single-stranded polyribonucleotides processively in the 3'- to 5'-direction. This is Polyribonucleotide nucleotidyltransferase from Vibrio parahaemolyticus serotype O3:K6 (strain RIMD 2210633).